Here is a 417-residue protein sequence, read N- to C-terminus: NADH-quinone oxidoreductase subunit D (417 aa).

Belongs to the complex I 49 kDa subunit family. As to quaternary structure, NDH-1 is composed of 14 different subunits. Subunits NuoB, C, D, E, F, and G constitute the peripheral sector of the complex.

It is found in the cell inner membrane. It carries out the reaction a quinone + NADH + 5 H(+)(in) = a quinol + NAD(+) + 4 H(+)(out). Functionally, NDH-1 shuttles electrons from NADH, via FMN and iron-sulfur (Fe-S) centers, to quinones in the respiratory chain. The immediate electron acceptor for the enzyme in this species is believed to be ubiquinone. Couples the redox reaction to proton translocation (for every two electrons transferred, four hydrogen ions are translocated across the cytoplasmic membrane), and thus conserves the redox energy in a proton gradient. The chain is NADH-quinone oxidoreductase subunit D from Nitrosomonas eutropha (strain DSM 101675 / C91 / Nm57).